The following is a 365-amino-acid chain: UDP-N-acetylglucosamine--N-acetylmuramyl-(pentapeptide) pyrophosphoryl-undecaprenol N-acetylglucosamine transferase (365 aa).

UDP-N-acetyl-alpha-D-glucosamine is bound by residues 13–15 (TGG), Asn-125, Arg-165, Ser-192, and Gln-293.

It belongs to the glycosyltransferase 28 family. MurG subfamily.

It localises to the cell inner membrane. The enzyme catalyses di-trans,octa-cis-undecaprenyl diphospho-N-acetyl-alpha-D-muramoyl-L-alanyl-D-glutamyl-meso-2,6-diaminopimeloyl-D-alanyl-D-alanine + UDP-N-acetyl-alpha-D-glucosamine = di-trans,octa-cis-undecaprenyl diphospho-[N-acetyl-alpha-D-glucosaminyl-(1-&gt;4)]-N-acetyl-alpha-D-muramoyl-L-alanyl-D-glutamyl-meso-2,6-diaminopimeloyl-D-alanyl-D-alanine + UDP + H(+). The protein operates within cell wall biogenesis; peptidoglycan biosynthesis. Cell wall formation. Catalyzes the transfer of a GlcNAc subunit on undecaprenyl-pyrophosphoryl-MurNAc-pentapeptide (lipid intermediate I) to form undecaprenyl-pyrophosphoryl-MurNAc-(pentapeptide)GlcNAc (lipid intermediate II). This chain is UDP-N-acetylglucosamine--N-acetylmuramyl-(pentapeptide) pyrophosphoryl-undecaprenol N-acetylglucosamine transferase, found in Ruegeria pomeroyi (strain ATCC 700808 / DSM 15171 / DSS-3) (Silicibacter pomeroyi).